The chain runs to 193 residues: Adenylate kinase (193 aa).

10 to 15 contributes to the ATP binding site; the sequence is GAGKGT. The segment at 30-59 is NMP; that stretch reads STGDMLRAAVKAGTPIGLKAKAVMDAGGLV. AMP contacts are provided by residues threonine 31, arginine 36, 57-59, 85-88, and glutamine 92; these read GLV and GFPR. Residues 126–142 form an LID region; the sequence is KRAKETLAAGGTVRADD. Arginine 127 lines the ATP pocket. The AMP site is built by arginine 139 and arginine 150. Alanine 178 is a binding site for ATP.

This sequence belongs to the adenylate kinase family. Monomer.

It is found in the cytoplasm. It catalyses the reaction AMP + ATP = 2 ADP. It functions in the pathway purine metabolism; AMP biosynthesis via salvage pathway; AMP from ADP: step 1/1. Functionally, catalyzes the reversible transfer of the terminal phosphate group between ATP and AMP. Plays an important role in cellular energy homeostasis and in adenine nucleotide metabolism. The chain is Adenylate kinase from Beijerinckia indica subsp. indica (strain ATCC 9039 / DSM 1715 / NCIMB 8712).